The following is a 218-amino-acid chain: Adenylate kinase (218 aa).

10–15 (GAGKGT) lines the ATP pocket. Residues 30–59 (STGDMLRAAVKEGSELGLKVKEIMNSGGLV) are NMP. Residues Thr31, Arg36, 57–59 (GLV), 85–88 (GFPR), and Gln92 contribute to the AMP site. An LID region spans residues 122–159 (GRRVHPGSGRVYHVDYNPPKEEGKDDVTGEALIQRDDD). ATP is bound by residues Arg123 and 132 to 133 (VY). Residues Arg156 and Arg167 each coordinate AMP. ATP is bound at residue Gly203.

This sequence belongs to the adenylate kinase family. In terms of assembly, monomer.

It is found in the cytoplasm. The catalysed reaction is AMP + ATP = 2 ADP. It functions in the pathway purine metabolism; AMP biosynthesis via salvage pathway; AMP from ADP: step 1/1. In terms of biological role, catalyzes the reversible transfer of the terminal phosphate group between ATP and AMP. Plays an important role in cellular energy homeostasis and in adenine nucleotide metabolism. The protein is Adenylate kinase of Chromohalobacter salexigens (strain ATCC BAA-138 / DSM 3043 / CIP 106854 / NCIMB 13768 / 1H11).